Consider the following 430-residue polypeptide: Adenylosuccinate synthetase (430 aa).

Residues 13 to 19 and 41 to 43 each bind GTP; these read GDEGKGK and GHT. The active-site Proton acceptor is the aspartate 14. The Mg(2+) site is built by aspartate 14 and glycine 41. Residues 14-17, 39-42, threonine 130, arginine 144, glutamine 225, threonine 240, and arginine 304 contribute to the IMP site; these read DEGK and NAGH. The active-site Proton donor is the histidine 42. 300 to 306 lines the substrate pocket; the sequence is ASTGRPR. Residues arginine 306, 332–334, and 414–416 each bind GTP; these read KLD and STG.

The protein belongs to the adenylosuccinate synthetase family. Homodimer. Requires Mg(2+) as cofactor.

The protein localises to the cytoplasm. The catalysed reaction is IMP + L-aspartate + GTP = N(6)-(1,2-dicarboxyethyl)-AMP + GDP + phosphate + 2 H(+). Its pathway is purine metabolism; AMP biosynthesis via de novo pathway; AMP from IMP: step 1/2. Plays an important role in the de novo pathway of purine nucleotide biosynthesis. Catalyzes the first committed step in the biosynthesis of AMP from IMP. The sequence is that of Adenylosuccinate synthetase from Xylella fastidiosa (strain M12).